The following is a 71-amino-acid chain: Hainantoxin-X-2 (71 aa).

The first 26 residues, 1–26 (MKTAIFTVVLALAVFAVLCLVVSTHA), serve as a signal peptide directing secretion. Residues 27–43 (ERHSKTDMEDSPMIQER) constitute a propeptide that is removed on maturation. Cystine bridges form between Cys52-Cys65 and Cys61-Cys70.

It belongs to the neurotoxin 36 family. 02 subfamily. Expressed by the venom gland.

Its subcellular location is the secreted. In terms of biological role, reversibly blocks N-type calcium channels (Cav2.2/CACNA1B) in rat dorsal root ganglion cells. Elicits no toxic symptoms in either vertebrates or invertebrates during a period of 48 hours post-injection, when it was assayed in vivo by direct injection into mice and cockroaches. The sequence is that of Hainantoxin-X-2 from Cyriopagopus hainanus (Chinese bird spider).